Reading from the N-terminus, the 432-residue chain is Trigger factor (432 aa).

The PPIase FKBP-type domain occupies 161–246 (EDRVTIDFTG…LKKVEERELP (86 aa)).

It belongs to the FKBP-type PPIase family. Tig subfamily. As to quaternary structure, homodimer and monomer. In vivo most of the ribosomes are in complex with monomeric TF. Uncomplexed TF, however, is in a monomer-dimer equilibrium with approximately two thirds of TF existing in a dimeric state.

Its subcellular location is the cytoplasm. The enzyme catalyses [protein]-peptidylproline (omega=180) = [protein]-peptidylproline (omega=0). In terms of biological role, involved in protein export. Acts as a chaperone by maintaining the newly synthesized protein in an open conformation. Functions as a peptidyl-prolyl cis-trans isomerase. This Shigella dysenteriae serotype 1 (strain Sd197) protein is Trigger factor.